The primary structure comprises 270 residues: Putative phosphoenolpyruvate synthase regulatory protein (270 aa).

150–157 (GVSRCGKT) serves as a coordination point for ADP.

Belongs to the pyruvate, phosphate/water dikinase regulatory protein family. PSRP subfamily.

The enzyme catalyses [pyruvate, water dikinase] + ADP = [pyruvate, water dikinase]-phosphate + AMP + H(+). The catalysed reaction is [pyruvate, water dikinase]-phosphate + phosphate + H(+) = [pyruvate, water dikinase] + diphosphate. Its function is as follows. Bifunctional serine/threonine kinase and phosphorylase involved in the regulation of the phosphoenolpyruvate synthase (PEPS) by catalyzing its phosphorylation/dephosphorylation. This Shewanella denitrificans (strain OS217 / ATCC BAA-1090 / DSM 15013) protein is Putative phosphoenolpyruvate synthase regulatory protein.